Here is a 690-residue protein sequence, read N- to C-terminus: Potassium-transporting ATPase ATP-binding subunit (690 aa).

The next 4 helical transmembrane spans lie at 49–69 (SPVM…CFVP), 72–92 (AVPT…VLFA), 229–249 (VALD…VVTL), and 253–273 (ALFA…VTLI). Aspartate 317 serves as the catalytic 4-aspartylphosphate intermediate. ATP contacts are provided by residues aspartate 354, glutamate 358, 385-392 (FSAETRLS), and lysine 403. 2 residues coordinate Mg(2+): aspartate 526 and aspartate 530. 3 helical membrane-spanning segments follow: residues 596 to 616 (FAIL…LNVM), 624 to 644 (AILS…PLAL), and 662 to 682 (LLIY…AIDL).

This sequence belongs to the cation transport ATPase (P-type) (TC 3.A.3) family. Type IA subfamily. In terms of assembly, the system is composed of three essential subunits: KdpA, KdpB and KdpC.

The protein resides in the cell inner membrane. The catalysed reaction is K(+)(out) + ATP + H2O = K(+)(in) + ADP + phosphate + H(+). Functionally, part of the high-affinity ATP-driven potassium transport (or Kdp) system, which catalyzes the hydrolysis of ATP coupled with the electrogenic transport of potassium into the cytoplasm. This subunit is responsible for energy coupling to the transport system and for the release of the potassium ions to the cytoplasm. This chain is Potassium-transporting ATPase ATP-binding subunit, found in Pseudomonas aeruginosa (strain ATCC 15692 / DSM 22644 / CIP 104116 / JCM 14847 / LMG 12228 / 1C / PRS 101 / PAO1).